The chain runs to 260 residues: Transcription factor MYB4 (260 aa).

2 HTH myb-type domains span residues 12–64 (AVEV…LNYL) and 65–119 (RPGI…SKRS). 2 consecutive DNA-binding regions (H-T-H motif) follow at residues 40–64 (WRMLPAKAGLKRCGKSCRLRWLNYL) and 92–115 (WSIIAGRIPGRTDNEIKNHWNTHL).

It is found in the nucleus. In terms of biological role, transcription activator involved in the spatiotemporal regulation of flavonoid biosynthesis specifically in the corms of Montbretia. Activates the promoters of enzymes involved in the biosynthesis of the flavonol myricetin and the flavonol-glycoside montbretin A (MbA). MbA is a potent inhibitor of human pancreatic alpha-amylase and is being developed as drug candidate to treat type-2 diabetes. The protein is Transcription factor MYB4 of Crocosmia x crocosmiiflora (Montbretia).